A 304-amino-acid polypeptide reads, in one-letter code: tRNA dimethylallyltransferase (304 aa).

ATP is bound at residue 2-9 (GPTASGKT). 4–9 (TASGKT) contributes to the substrate binding site. 4 interaction with substrate tRNA regions span residues 27–30 (DSAL), 151–155 (QRINR), 232–237 (RCVGYR), and 265–272 (KRQITWLR).

It belongs to the IPP transferase family. In terms of assembly, monomer. It depends on Mg(2+) as a cofactor.

The enzyme catalyses adenosine(37) in tRNA + dimethylallyl diphosphate = N(6)-dimethylallyladenosine(37) in tRNA + diphosphate. Catalyzes the transfer of a dimethylallyl group onto the adenine at position 37 in tRNAs that read codons beginning with uridine, leading to the formation of N6-(dimethylallyl)adenosine (i(6)A). This chain is tRNA dimethylallyltransferase, found in Actinobacillus pleuropneumoniae serotype 5b (strain L20).